A 1137-amino-acid polypeptide reads, in one-letter code: AP-4 complex subunit epsilon-1 (1137 aa).

Phosphoserine occurs at positions 700 and 857. Residues 727 to 1137 form an interaction with TEPSIN region; that stretch reads SGALPVPQES…YQCQKVMEGS (411 aa).

Belongs to the adaptor complexes large subunit family. As to quaternary structure, adaptor protein complex 4 (AP-4) is a heterotetramer composed of two large adaptins (epsilon-type subunit AP4E1 and beta-type subunit AP4B1), a medium adaptin (mu-type subunit AP4M1) and a small adaptin (sigma-type AP4S1). Interacts with TEPSIN. Interacts with GRIA2; probably indirect it mediates the somatodendritic localization of GRIA2 in neurons. As to expression, widely expressed.

The protein localises to the golgi apparatus. It localises to the trans-Golgi network membrane. In terms of biological role, component of the adaptor protein complex 4 (AP-4). Adaptor protein complexes are vesicle coat components involved both in vesicle formation and cargo selection. They control the vesicular transport of proteins in different trafficking pathways. AP-4 forms a non clathrin-associated coat on vesicles departing the trans-Golgi network (TGN) and may be involved in the targeting of proteins from the trans-Golgi network (TGN) to the endosomal-lysosomal system. It is also involved in protein sorting to the basolateral membrane in epithelial cells and the proper asymmetric localization of somatodendritic proteins in neurons. AP-4 is involved in the recognition and binding of tyrosine-based sorting signals found in the cytoplasmic part of cargos, but may also recognize other types of sorting signal. This is AP-4 complex subunit epsilon-1 from Homo sapiens (Human).